The sequence spans 207 residues: Thymidine kinase (207 aa).

ATP is bound by residues 15 to 22 and 88 to 91; these read GCMFSGKS and DEIQ. Glu-89 serves as the catalytic Proton acceptor. Zn(2+) contacts are provided by Cys-145, Cys-148, Cys-183, and His-186. A compositionally biased stretch (basic residues) spans 184 to 198; the sequence is RHHHEVPGKPKKRYN. Residues 184 to 207 are disordered; the sequence is RHHHEVPGKPKKRYNHPLAGHTGE.

It belongs to the thymidine kinase family. Homotetramer.

The protein localises to the cytoplasm. It carries out the reaction thymidine + ATP = dTMP + ADP + H(+). The polypeptide is Thymidine kinase (Geobacillus kaustophilus (strain HTA426)).